Reading from the N-terminus, the 183-residue chain is ATP-dependent protease subunit HslV (183 aa).

Thr2 is a catalytic residue. The Na(+) site is built by Ala157, Cys160, and Thr163.

The protein belongs to the peptidase T1B family. HslV subfamily. As to quaternary structure, a double ring-shaped homohexamer of HslV is capped on each side by a ring-shaped HslU homohexamer. The assembly of the HslU/HslV complex is dependent on binding of ATP.

The protein resides in the cytoplasm. It catalyses the reaction ATP-dependent cleavage of peptide bonds with broad specificity.. Allosterically activated by HslU binding. Its function is as follows. Protease subunit of a proteasome-like degradation complex believed to be a general protein degrading machinery. In Marinomonas sp. (strain MWYL1), this protein is ATP-dependent protease subunit HslV.